We begin with the raw amino-acid sequence, 188 residues long: dCTP deaminase (188 aa).

DCTP is bound by residues 111 to 116, 135 to 137, Q156, Y170, K179, and Q180; these read KSTYAR and TLE. E137 serves as the catalytic Proton donor/acceptor.

Belongs to the dCTP deaminase family. In terms of assembly, homotrimer.

It catalyses the reaction dCTP + H2O + H(+) = dUTP + NH4(+). The protein operates within pyrimidine metabolism; dUMP biosynthesis; dUMP from dCTP (dUTP route): step 1/2. Functionally, catalyzes the deamination of dCTP to dUTP. The polypeptide is dCTP deaminase (Rickettsia typhi (strain ATCC VR-144 / Wilmington)).